We begin with the raw amino-acid sequence, 766 residues long: Alpha-onocerin synthase LCD (766 aa).

7 PFTB repeats span residues 101 to 143, 151 to 192, 456 to 507, 517 to 558, 594 to 634, 643 to 684, and 705 to 752; these read LCRA…GALD, QREI…RLMG, QESY…STTD, IHEC…PGYK, IQEG…LASG, IQRA…HVVH, and LHRA…WALG. D488 functions as the Proton donor in the catalytic mechanism.

Belongs to the terpene cyclase/mutase family.

It carries out the reaction pre-alpha-onocerin = alpha-onocerin. Its pathway is secondary metabolite biosynthesis; terpenoid biosynthesis. Functionally, oxidosqualene cyclase involved in the biosynthesis of alpha-onocerin, a triterpenoid characterized by a symmetrical structure due to cyclizations at both termini of dioxidosqualene that inhibits acetylcholinesterase. Catalyzes the second half of the cyclization, exclusively from pre-alpha-onocerin. The chain is Alpha-onocerin synthase LCD from Lycopodium clavatum (Stag's-horn clubmoss).